The chain runs to 185 residues: Ribosome-recycling factor (185 aa).

It belongs to the RRF family.

It localises to the cytoplasm. Functionally, responsible for the release of ribosomes from messenger RNA at the termination of protein biosynthesis. May increase the efficiency of translation by recycling ribosomes from one round of translation to another. The chain is Ribosome-recycling factor from Alkaliphilus oremlandii (strain OhILAs) (Clostridium oremlandii (strain OhILAs)).